The chain runs to 37 residues: Large ribosomal subunit protein bL36 (37 aa).

This sequence belongs to the bacterial ribosomal protein bL36 family.

This chain is Large ribosomal subunit protein bL36, found in Salinispora arenicola (strain CNS-205).